Consider the following 1756-residue polypeptide: MRRSKAYGERYLASVQGSAPSPGKKLRGFYFAKLYYEAKEYDLAKKYVCTYLSVQERDPRAHRFLGLLYELEENTEKAVECYRRSLELNPPQKDLVLKIAELLCKNDVTDGRAKYWVERAAKLFPGSPAIYKLKEHLLDCEGEDGWNKLFDWIQSELYVRPDDVHMNIRLVELYRSNKRLKDAVARCHEAERNIALRSSLEWNSCVVQTLKEYLESLQCLESDKSDWRATNTDLLLAYANLMLLTLSTRDVQESRELLESFDSALQSAKSSLGGNDELSATFLEMKGHFYMHAGSLLLKMGQHGNNVQWQALSELAALCYVIAFQVPRPKIKLIKGEAGQNLLEMMACDRLSQSGHMLLNLSRGKQDFLKEVVETFANKSGQSVLYNALFSSQSSKDTSFLGSDDIGNIDVQEPELEDLARYDVGAIQAHNGSLQHLTWLGLQWNSLPALPGIRKWLKQLFHHLPQETSRLETNAPESICILDLEVFLLGVVYTSHLQLKEKCNSHHSSYQPLCLPLPVCKRLCTERQKSWWDAVCTLIHRKAVPGNSAELRLVVQHEINTLRAQEKHGLQPALLVHWAKCLQKMGRGLNSSYDQQEYIGRSVHYWKKVLPLLKIIKKNSIPEPIDPLFKHFHSVDIQASEIVEYEEDAHITFAILDAVHGNIEDAVTAFESIKSVVSYWNLALIFHRKAEDIENDAVFPEEQEECKNYLRKTRDYLIKIIDDSDSNLSVVKKLPVPLESVKEMLKSVMQELEDYSEGGPLYKNGSLRNADSEIKHSTPSPTKYSLSPSKSYKYSPKTPPRWAEDQNSLRKMICQEVKAITKLNSSKSASRHRWPTENYGPDSVPDGYQGSQTFHGAPLTVATTGPSVYYSQSPAYNSQYLLRPAANVTPTKGSSNTEFKSTKEGFSIAVSADGFKFGISEPGNQEKKSEKPLENDTGFQAQDISGQKNGRGVIFGQTSSTFTFADVAKSTSGEGFQFGKKDPNFKGFSGAGEKLFSSQCGKMANKANTSGDFEKDDDACKTEDSDDIHFEPVVQMPEKVELVTGEEGEKVLYSQGVKLFRFDAEISQWKERGLGNLKILKNEVNGKPRMLMRRDQVLKVCANHWITTTMNLKPLSGSDRAWMWLASDFSDGDAKLERLAAQFKTPELAEEFKQKFEECQRLLLDIPLQTPHKLVDTGRAAKLIQRAEEMKSGLKDFKTFLTNDQTKVTEEENKGSGTGAAGASDTTIKPNPENTGPTLEWDNYDLREDALDDNVSSSSVHDSPLASSPVRKNIFRFDESTTGFNFSFKSALSLSKSPAKLNQSGTSVGTDEESDVTQEEERDGQYFEPVVPLPDLVEVSSGEENEQVVFSHMAELYRYDKDVGQWKERGIGDIKILQNYDNKQVRIVMRRDQVLKLCANHRITPDMSLQNMKGTERVWVWTACDFADGERKVEHLAVRFKLQDVADSFKKIFDEAKTAQEKDSLITPHVSRSSTPRESPCGKIAVAVLEETTRERTDVIQGDDVADAASEVEVSSTSETTTKAVVSPPKFVFGSESVKRIFSSEKSNPFAFGNSSATGSLFGFSFNAPLKSNDSETSSVAQSGSESKVEPKKCELSKNSDIEQSSDSKVKNLSASFPMEESSINYTFKTPEKEPPLWHAEFTKEELVQKLSSTTKSADQLNGLLRETEATSAVLMEQIKLLKSEIRRLERNQEESAANVEHLKNVLLQFIFLKPGSERESLLPVINTMLQLSPEEKGKLAAVAQGLQETSIPKKK.

Ser-21 carries the post-translational modification Phosphoserine. TPR repeat units lie at residues 59–92, 583–616, and 647–680; these read PRAH…NPPQ, QKMG…LKII, and EDAH…VSYW. A disordered region spans residues 759 to 804; the sequence is GPLYKNGSLRNADSEIKHSTPSPTKYSLSPSKSYKYSPKTPPRWAE. The segment covering 777–796 has biased composition (low complexity); the sequence is STPSPTKYSLSPSKSYKYSP. A RanBD1 1 domain is found at 1029–1165; that stretch reads HFEPVVQMPE…FEECQRLLLD (137 aa). Disordered regions lie at residues 1206-1241 and 1299-1324; these read TKVT…TLEW and AKLN…ERDG. Residues 1228 to 1237 are compositionally biased toward polar residues; sequence IKPNPENTGP. Over residues 1310–1322 the composition is skewed to acidic residues; that stretch reads TDEESDVTQEEER. The region spanning 1326–1462 is the RanBD1 2 domain; it reads YFEPVVPLPD…FDEAKTAQEK (137 aa). Over residues 1573-1586 the composition is skewed to polar residues; that stretch reads NDSETSSVAQSGSE. A disordered region spans residues 1573–1614; sequence NDSETSSVAQSGSESKVEPKKCELSKNSDIEQSSDSKVKNLS. Residues 1587-1610 show a composition bias toward basic and acidic residues; sequence SKVEPKKCELSKNSDIEQSSDSKV. The 51-residue stretch at 1693–1743 folds into the GRIP domain; the sequence is QEESAANVEHLKNVLLQFIFLKPGSERESLLPVINTMLQLSPEEKGKLAAV.

The sequence is that of RANBP2-like and GRIP domain-containing protein 2 (RGPD2) from Homo sapiens (Human).